Reading from the N-terminus, the 147-residue chain is Putative pre-16S rRNA nuclease (147 aa).

It belongs to the YqgF nuclease family.

Its subcellular location is the cytoplasm. Its function is as follows. Could be a nuclease involved in processing of the 5'-end of pre-16S rRNA. The sequence is that of Putative pre-16S rRNA nuclease from Ligilactobacillus salivarius (strain UCC118) (Lactobacillus salivarius).